The following is a 149-amino-acid chain: HTH-type transcriptional regulator LrpB (149 aa).

The 62-residue stretch at 3 to 64 folds into the HTH asnC-type domain; that stretch reads IDSIDFQILQ…VVDELKMGFS (62 aa). The segment at residues 22 to 41 is a DNA-binding region (H-T-H motif); it reads WKEIGEKIHMTGQAVGNRIK.

Its function is as follows. Negative regulation of glyA transcription and kinB-dependent sporulation. The chain is HTH-type transcriptional regulator LrpB (lrpB) from Bacillus subtilis (strain 168).